Here is a 334-residue protein sequence, read N- to C-terminus: Phosphate acyltransferase (334 aa).

This sequence belongs to the PlsX family. As to quaternary structure, homodimer. Probably interacts with PlsY.

It localises to the cytoplasm. The enzyme catalyses a fatty acyl-[ACP] + phosphate = an acyl phosphate + holo-[ACP]. Its pathway is lipid metabolism; phospholipid metabolism. In terms of biological role, catalyzes the reversible formation of acyl-phosphate (acyl-PO(4)) from acyl-[acyl-carrier-protein] (acyl-ACP). This enzyme utilizes acyl-ACP as fatty acyl donor, but not acyl-CoA. This chain is Phosphate acyltransferase, found in Streptococcus thermophilus (strain CNRZ 1066).